A 231-amino-acid polypeptide reads, in one-letter code: Uridylate kinase (231 aa).

6-9 (KLSG) contacts ATP. Residues 14 to 19 (GEGGRG) are involved in allosteric activation by GTP. ATP contacts are provided by G49 and R53. UMP is bound by residues D66 and 127–134 (TSNPFFTT). The ATP site is built by T154, Y160, and D163.

Belongs to the UMP kinase family. As to quaternary structure, homohexamer.

It is found in the cytoplasm. It catalyses the reaction UMP + ATP = UDP + ADP. Its pathway is pyrimidine metabolism; CTP biosynthesis via de novo pathway; UDP from UMP (UMPK route): step 1/1. Its activity is regulated as follows. Allosterically activated by GTP. Inhibited by UTP. Catalyzes the reversible phosphorylation of UMP to UDP. This is Uridylate kinase from Thermotoga petrophila (strain ATCC BAA-488 / DSM 13995 / JCM 10881 / RKU-1).